The sequence spans 188 residues: Large ribosomal subunit protein eL18 (188 aa).

Residues G153–N188 are disordered. Residues S161–G171 show a composition bias toward basic residues.

Belongs to the eukaryotic ribosomal protein eL18 family. In terms of assembly, component of the large ribosomal subunit.

The protein resides in the cytoplasm. The protein localises to the cytosol. It is found in the rough endoplasmic reticulum. Component of the large ribosomal subunit. The ribosome is a large ribonucleoprotein complex responsible for the synthesis of proteins in the cell. The sequence is that of Large ribosomal subunit protein eL18 (rpl18) from Oreochromis mossambicus (Mozambique tilapia).